A 319-amino-acid polypeptide reads, in one-letter code: Polyprenal reductase (319 aa).

Over 1–12 the chain is Cytoplasmic; that stretch reads MQLVQLLPPGVS. A helical membrane pass occupies residues 13–33; the sequence is LLALVWLAVDAAFLTALLLYL. Over 34-79 the chain is Lumenal; it reads QRGCDSGRSLLCSVFQDLIRYGKTKSGLRRPSWLQWFDIPKRCFWH. Residues 80–100 form a helical membrane-spanning segment; it reads FYFVSLVWNGFLLWILLHLLL. At 101-122 the chain is on the cytoplasmic side; the sequence is QSVPVPEWLQAVLQFLCAGSEP. Residues 123–143 form a helical membrane-spanning segment; the sequence is QVLGGELSVVLAFSLLWLHSL. Residues 144-158 lie on the Lumenal side of the membrane; that stretch reads RRLLECLFVSIFSNG. The chain crosses the membrane as a helical span at residues 159-179; sequence VIHFVQYCFGLGYYILIGFTI. At 180–195 the chain is on the cytoplasmic side; that stretch reads LGYCPLDRRTAVSLDD. The helical transmembrane segment at 196–216 threads the bilayer; sequence LLMQGNWYHILGLTLYVWASL. Residues 217–266 lie on the Lumenal side of the membrane; sequence HQYTCHCILADLRKSASGAIINLKHAVPTGDWFEKVSCPHYFAELLIYLS. Residues 267–287 form a helical membrane-spanning segment; that stretch reads IAVVFGLLNTIWWLVVLYVLL. Residues 288–319 are Cytoplasmic-facing; sequence SQALAAVLCHEFYHEKFDSYPIHRKAFIPLIF.

It belongs to the steroid 5-alpha reductase family. Polyprenal reductase subfamily.

It localises to the endoplasmic reticulum membrane. The catalysed reaction is a di-trans,poly-cis-dolichal + NADP(+) = a di-trans,poly-cis-polyprenal + NADPH + H(+). The enzyme catalyses a 3-oxo-5alpha-steroid + NADP(+) = a 3-oxo-Delta(4)-steroid + NADPH + H(+). It carries out the reaction androst-4-ene-3,17-dione + NADPH + H(+) = 5alpha-androstan-3,17-dione + NADP(+). It catalyses the reaction 17beta-hydroxy-5alpha-androstan-3-one + NADP(+) = testosterone + NADPH + H(+). It participates in protein modification; protein glycosylation. Its function is as follows. Plays a key role in early steps of protein N-linked glycosylation by being involved in the conversion of polyprenol into dolichol. Acts as a polyprenal reductase that mediates the reduction of polyprenal into dolichal in a NADP-dependent mechanism. Dolichols are required for the synthesis of dolichol-linked monosaccharides and the oligosaccharide precursor used for N-glycosylation. Also able to convert testosterone (T) into 5-alpha-dihydrotestosterone (DHT). The protein is Polyprenal reductase (srd5a3) of Xenopus laevis (African clawed frog).